Reading from the N-terminus, the 500-residue chain is MIAIYVRVSTEEQAIKGSSIDSQIEACIKKAGTKDVLKYADEGFSGELLERPALNRLREDASKGLISQVICYDPDRLSRKLMNQLIIDDELRKRNIPLIFVNGEYANSPEGQLFFAMRGAISEFEKAKIKERTSSGRLQKMKKGMIIKDSKLYGYKFVKEKRTLEILEEEAKIIRMIFNYFTDHKSPFFGRVNGIALHLTQMGVKTKKGAKVWHRQVVRQILMNSSYKGEHRQYKYDTEGSYVSKQAGNKSIIKIRPEEEQITVTIPAIVPAEQWDYAQELLGQSKRKHLSISPHNYLLSGLVRCGKCGNTMTGKKRKSHGKDYYVYTCRKNYSGAKDRGCGKEMSENKLNRHVWGEIFKFITNPQKYVSFKEAEQSNHLSDELELIEKEIEKTKKGRKRLLTLISLSDDDDLDIDEIKAQIIELQKKQNQLTEKCNEIQSKMKVLDDTSSSENALKRAIDYFQSIGADNLTLEDKKTIVNFIVKEVTIVDSDTIYIETY.

A Resolvase/invertase-type recombinase catalytic domain is found at 1–144; it reads MIAIYVRVST…SGRLQKMKKG (144 aa). Residue S9 is the O-(5'-phospho-DNA)-serine intermediate of the active site. Positions 152–288 form a DNA-binding region, recombinase; the sequence is LYGYKFVKEK…QELLGQSKRK (137 aa). A coiled-coil region spans residues 372-448; that stretch reads KEAEQSNHLS…IQSKMKVLDD (77 aa).

The protein in the N-terminal section; belongs to the site-specific recombinase resolvase family.

Putative site-specific recombinase having a very important role in sporulation. It probably plays a role in the recombination of SpoIIIC and SpoIVCB to form sigma K factor. The polypeptide is Putative DNA recombinase (cisA) (Bacillus subtilis (strain 168)).